The chain runs to 22 residues: Unknown endosperm protein L (22 aa).

The span at 1 to 11 (MRHSNKIRDEE) shows a compositional bias: basic and acidic residues. The interval 1 to 22 (MRHSNKIRDEEMVNNTRLNXXA) is disordered. A compositionally biased stretch (polar residues) spans 13–22 (VNNTRLNXXA).

The N-terminus is blocked.

The polypeptide is Unknown endosperm protein L (Hordeum vulgare (Barley)).